The sequence spans 711 residues: Long-chain-fatty-acid--CoA ligase 4 (711 aa).

The chain crosses the membrane as a helical; Signal-anchor for type III membrane protein span at residues 8–28 (LTIVLLPVHLLITIYSALIFI). The Cytoplasmic segment spans residues 29–711 (PWYFLTNAKK…KDIERMYGGK (683 aa)). Ser447 carries the phosphoserine modification.

This sequence belongs to the ATP-dependent AMP-binding enzyme family. It depends on Mg(2+) as a cofactor.

The protein resides in the mitochondrion outer membrane. It localises to the peroxisome membrane. It is found in the microsome membrane. Its subcellular location is the endoplasmic reticulum membrane. The protein localises to the cell membrane. It carries out the reaction a long-chain fatty acid + ATP + CoA = a long-chain fatty acyl-CoA + AMP + diphosphate. The enzyme catalyses (5Z,8Z,11Z,14Z)-eicosatetraenoate + ATP + CoA = (5Z,8Z,11Z,14Z)-eicosatetraenoyl-CoA + AMP + diphosphate. The catalysed reaction is 15-hydroxy-(5Z,8Z,11Z,13E)-eicosatetraenoate + ATP + CoA = 15-hydroxy-(5Z,8Z,11Z,13E)-eicosatetraenoyl-CoA + AMP + diphosphate. It catalyses the reaction 12-hydroxy-(5Z,8Z,10E,14Z)-eicosatetraenoate + ATP + CoA = 12-hydroxy-(5Z,8Z,10E,14Z)-eicosatetraenoyl-CoA + AMP + diphosphate. It carries out the reaction 5-hydroxy-(6E,8Z,11Z,14Z)-eicosatetraenoate + ATP + CoA = 5-hydroxy-(6E,8Z,11Z,14Z)-eicosatetraenoyl-CoA + AMP + diphosphate. The enzyme catalyses 5,6-epoxy-(8Z,11Z,14Z)-eicosatrienoate + ATP + CoA = 5,6-epoxy-(8Z,11Z,14Z)-eicosatrienoyl-CoA + AMP + diphosphate. The catalysed reaction is 14,15-epoxy-(5Z,8Z,11Z)-eicosatrienoate + ATP + CoA = 14,15-epoxy-(5Z,8Z,11Z)-eicosatrienoyl-CoA + AMP + diphosphate. It catalyses the reaction 11,12-epoxy-(5Z,8Z,14Z)-eicosatrienoate + ATP + CoA = 11,12-epoxy-(5Z,8Z,14Z)-eicosatrienoyl-CoA + AMP + diphosphate. It carries out the reaction 8,9-epoxy-(5Z,11Z,14Z)-eicosatrienoate + ATP + CoA = 8,9-epoxy-(5Z,11Z,14Z)-eicosatrienoyl-CoA + AMP + diphosphate. The enzyme catalyses hexadecanoate + ATP + CoA = hexadecanoyl-CoA + AMP + diphosphate. The catalysed reaction is (E)-hexadec-2-enoate + ATP + CoA = (2E)-hexadecenoyl-CoA + AMP + diphosphate. Its activity is regulated as follows. Both triacsin C and rosiglitazone inhibit arachidonoyl-CoA ligase activity. In terms of biological role, catalyzes the conversion of long-chain fatty acids to their active form acyl-CoA for both synthesis of cellular lipids, and degradation via beta-oxidation. Preferentially activates arachidonate and eicosapentaenoate as substrates. Preferentially activates 8,9-EET &gt; 14,15-EET &gt; 5,6-EET &gt; 11,12-EET. Modulates glucose-stimulated insulin secretion by regulating the levels of unesterified EETs. Modulates prostaglandin E2 secretion. The chain is Long-chain-fatty-acid--CoA ligase 4 (Acsl4) from Rattus norvegicus (Rat).